The chain runs to 118 residues: Cell division protein FtsB (118 aa).

Residues 1–3 lie on the Cytoplasmic side of the membrane; sequence MRL. Residues 4–21 form a helical membrane-spanning segment; sequence LFLVLLVLLGLIQYPLWL. Topologically, residues 22-118 are periplasmic; sequence GKGGWFKVWD…PRPPATPPRR (97 aa). Residues 28 to 62 adopt a coiled-coil conformation; the sequence is KVWDLQRQVAEQRETNDGLRARNTALEAEVRDLAT. Residues 88–118 are disordered; sequence LPPGTPLPSGNSTPQASALSKPRPPATPPRR. Residues 95-105 show a composition bias toward polar residues; it reads PSGNSTPQASA. Residues 109 to 118 show a composition bias toward pro residues; that stretch reads PRPPATPPRR.

This sequence belongs to the FtsB family. As to quaternary structure, part of a complex composed of FtsB, FtsL and FtsQ.

It localises to the cell inner membrane. Functionally, essential cell division protein. May link together the upstream cell division proteins, which are predominantly cytoplasmic, with the downstream cell division proteins, which are predominantly periplasmic. The polypeptide is Cell division protein FtsB (Bordetella parapertussis (strain 12822 / ATCC BAA-587 / NCTC 13253)).